Here is a 275-residue protein sequence, read N- to C-terminus: Phosphate import ATP-binding protein PstB (275 aa).

Residues 29–270 (VSVRDLNFYY…PTDRRTQDYI (242 aa)) enclose the ABC transporter domain. Residue 61–68 (GPSGCGKS) coordinates ATP.

It belongs to the ABC transporter superfamily. Phosphate importer (TC 3.A.1.7) family. As to quaternary structure, the complex is composed of two ATP-binding proteins (PstB), two transmembrane proteins (PstC and PstA) and a solute-binding protein (PstS).

It is found in the cell inner membrane. The enzyme catalyses phosphate(out) + ATP + H2O = ADP + 2 phosphate(in) + H(+). In terms of biological role, part of the ABC transporter complex PstSACB involved in phosphate import. Responsible for energy coupling to the transport system. The chain is Phosphate import ATP-binding protein PstB from Rhodopseudomonas palustris (strain BisB18).